Consider the following 29-residue polypeptide: U20-ctenitoxin-Co1a (29 aa).

Cystine bridges form between Cys3–Cys16 and Cys10–Cys21.

As to expression, expressed by the venom gland.

The protein localises to the secreted. The sequence is that of U20-ctenitoxin-Co1a from Ctenus ornatus (Brazilian spider).